Here is a 402-residue protein sequence, read N- to C-terminus: MADDMTQATEAPRNFTINFGPQHPAAHGVLRLVLELDGEVVERVDPHIGLLHRGTEKLLEHKTYLQGIGYFDRLDYVAPMNQEHAFCMAAEKLAGITVPKRGEYVRVLYCEIGRVLNHLLNVTTQAMDVGALTPPLWGFEEREKLMVFYERASGSRMHAHYFRPGGVHQDLPMKLVEDIRAWCDQFPAKLDDIDSLLTENRIFKQRNVDIGVVTKEDVLAWGFSGVMVRGSGLAWDLRRSQPYSVYDELKFDIPVGKNGDCYDRYLCRMEEMRESVKIMIQCCDWLMKDENAGEVLATDSKFSPPRRAEMKRSMEALIQHFKLYTEGVHVEEGETYVAVEAPKGEFGVYLVSDGSNKPYRLKIRAPGFAHLAAMDYMSKGHMLADVSAIIGSLDVVFGEIDR.

This sequence belongs to the complex I 49 kDa subunit family. NDH-1 is composed of 14 different subunits. Subunits NuoB, C, D, E, F, and G constitute the peripheral sector of the complex.

It is found in the cell inner membrane. It catalyses the reaction a quinone + NADH + 5 H(+)(in) = a quinol + NAD(+) + 4 H(+)(out). Its function is as follows. NDH-1 shuttles electrons from NADH, via FMN and iron-sulfur (Fe-S) centers, to quinones in the respiratory chain. The immediate electron acceptor for the enzyme in this species is believed to be ubiquinone. Couples the redox reaction to proton translocation (for every two electrons transferred, four hydrogen ions are translocated across the cytoplasmic membrane), and thus conserves the redox energy in a proton gradient. The sequence is that of NADH-quinone oxidoreductase subunit D from Maricaulis maris (strain MCS10) (Caulobacter maris).